The sequence spans 279 residues: UPF0276 protein SO_2008 (279 aa).

Belongs to the UPF0276 family.

This Shewanella oneidensis (strain ATCC 700550 / JCM 31522 / CIP 106686 / LMG 19005 / NCIMB 14063 / MR-1) protein is UPF0276 protein SO_2008.